The primary structure comprises 156 residues: Small ribosomal subunit protein uS7 (156 aa).

It belongs to the universal ribosomal protein uS7 family. As to quaternary structure, part of the 30S ribosomal subunit. Contacts proteins S9 and S11.

One of the primary rRNA binding proteins, it binds directly to 16S rRNA where it nucleates assembly of the head domain of the 30S subunit. Is located at the subunit interface close to the decoding center, probably blocks exit of the E-site tRNA. In Cronobacter sakazakii (strain ATCC BAA-894) (Enterobacter sakazakii), this protein is Small ribosomal subunit protein uS7.